Consider the following 342-residue polypeptide: Uroporphyrinogen decarboxylase (342 aa).

Substrate contacts are provided by residues 22 to 26 (RQAGR), Phe-41, Asp-72, Tyr-146, Ser-201, and His-317.

This sequence belongs to the uroporphyrinogen decarboxylase family. Homodimer.

The protein resides in the cytoplasm. The enzyme catalyses uroporphyrinogen III + 4 H(+) = coproporphyrinogen III + 4 CO2. It participates in porphyrin-containing compound metabolism; protoporphyrin-IX biosynthesis; coproporphyrinogen-III from 5-aminolevulinate: step 4/4. Functionally, catalyzes the decarboxylation of four acetate groups of uroporphyrinogen-III to yield coproporphyrinogen-III. The protein is Uroporphyrinogen decarboxylase of Orientia tsutsugamushi (strain Boryong) (Rickettsia tsutsugamushi).